We begin with the raw amino-acid sequence, 221 residues long: Urease accessory protein UreF (221 aa).

It belongs to the UreF family. UreD, UreF and UreG form a complex that acts as a GTP-hydrolysis-dependent molecular chaperone, activating the urease apoprotein by helping to assemble the nickel containing metallocenter of UreC. The UreE protein probably delivers the nickel.

The protein localises to the cytoplasm. In terms of biological role, required for maturation of urease via the functional incorporation of the urease nickel metallocenter. This chain is Urease accessory protein UreF, found in Teredinibacter turnerae (strain ATCC 39867 / T7901).